The sequence spans 399 residues: [Pyruvate dehydrogenase (acetyl-transferring)] kinase, mitochondrial (399 aa).

The N-terminal 18 residues, 1 to 18, are a transit peptide targeting the mitochondrion; the sequence is MFLTRRLLGPFTSAIARK. The Histidine kinase domain occupies 123–360; it reads VVETMAEGLI…DAMIFLKAIP (238 aa). Residues 247-254, Asp286, 305-306, and 321-326 each bind ATP; these read ELFKNSMR, ST, and GYGYGL.

The protein belongs to the PDK/BCKDK protein kinase family.

It is found in the mitochondrion matrix. It catalyses the reaction L-seryl-[pyruvate dehydrogenase E1 alpha subunit] + ATP = O-phospho-L-seryl-[pyruvate dehydrogenase E1 alpha subunit] + ADP + H(+). Inhibits the mitochondrial pyruvate dehydrogenase complex by phosphorylation of the E1 alpha subunit, thus contributing to the regulation of glucose metabolism. The polypeptide is [Pyruvate dehydrogenase (acetyl-transferring)] kinase, mitochondrial (Ascaris suum (Pig roundworm)).